Here is a 125-residue protein sequence, read N- to C-terminus: Small ribosomal subunit protein uS13 (125 aa).

The tract at residues 95–125 (GLPLRGQRTKTNARTRKGKRKTVANKKIASK) is disordered.

This sequence belongs to the universal ribosomal protein uS13 family. In terms of assembly, part of the 30S ribosomal subunit. Forms a loose heterodimer with protein S19. Forms two bridges to the 50S subunit in the 70S ribosome.

Located at the top of the head of the 30S subunit, it contacts several helices of the 16S rRNA. In the 70S ribosome it contacts the 23S rRNA (bridge B1a) and protein L5 of the 50S subunit (bridge B1b), connecting the 2 subunits; these bridges are implicated in subunit movement. Contacts the tRNAs in the A and P-sites. The sequence is that of Small ribosomal subunit protein uS13 from Borrelia garinii subsp. bavariensis (strain ATCC BAA-2496 / DSM 23469 / PBi) (Borreliella bavariensis).